We begin with the raw amino-acid sequence, 229 residues long: Small ribosomal subunit protein uS3 (229 aa).

Positions 38-106 (IREYIENKLF…KVHINVMEVK (69 aa)) constitute a KH type-2 domain. Residues 208-217 (PEVDENEETK) show a composition bias toward acidic residues. Residues 208–229 (PEVDENEETKEENKEKSEEKSE) form a disordered region. The segment covering 218-229 (EENKEKSEEKSE) has biased composition (basic and acidic residues).

Belongs to the universal ribosomal protein uS3 family. Part of the 30S ribosomal subunit. Forms a tight complex with proteins S10 and S14.

Binds the lower part of the 30S subunit head. Binds mRNA in the 70S ribosome, positioning it for translation. The protein is Small ribosomal subunit protein uS3 of Natranaerobius thermophilus (strain ATCC BAA-1301 / DSM 18059 / JW/NM-WN-LF).